The primary structure comprises 86 residues: Large ribosomal subunit protein bL27 (86 aa).

This sequence belongs to the bacterial ribosomal protein bL27 family.

The protein is Large ribosomal subunit protein bL27 of Christiangramia forsetii (strain DSM 17595 / CGMCC 1.15422 / KT0803) (Gramella forsetii).